The chain runs to 506 residues: Steroid (22S)-hydroxylase (506 aa).

Residues 12–32 (LLFFLPFILLALLTFYTTTVA) form a helical membrane-spanning segment. Cys-449 is a heme binding site.

Belongs to the cytochrome P450 family. Heme is required as a cofactor.

The protein resides in the membrane. The catalysed reaction is a C28-steroid + reduced [NADPH--hemoprotein reductase] + O2 = a (22S)-22-hydroxy C28-steroid + oxidized [NADPH--hemoprotein reductase] + H2O + H(+). It catalyses the reaction campesterol + reduced [NADPH--hemoprotein reductase] + O2 = (22S)-22-hydroxycampesterol + oxidized [NADPH--hemoprotein reductase] + H2O + H(+). The enzyme catalyses campestanol + reduced [NADPH--hemoprotein reductase] + O2 = 6-deoxycathasterone + oxidized [NADPH--hemoprotein reductase] + H2O + H(+). Its pathway is plant hormone biosynthesis; brassinosteroid biosynthesis. Functionally, catalyzes the C22-alpha-hydroxylation step in brassinosteroid biosynthesis, which is the rate-limiting step in this biosynthetic pathway. Catalyzes the conversion of campesterol (CR) to (22S)-22-hydroxycampesterol (22-OHCR, 22-hydroxyCR) and of campestanol (CN) to 6-deoxocathasterone (6-deoxoCT). This is Steroid (22S)-hydroxylase from Oryza sativa subsp. indica (Rice).